The sequence spans 114 residues: Iron-sulfur cluster insertion protein ErpA (114 aa).

Positions 42, 106, and 108 each coordinate iron-sulfur cluster.

It belongs to the HesB/IscA family. As to quaternary structure, homodimer. Iron-sulfur cluster serves as cofactor.

Required for insertion of 4Fe-4S clusters for at least IspG. This is Iron-sulfur cluster insertion protein ErpA from Proteus mirabilis (strain HI4320).